The following is a 489-amino-acid chain: Ribonuclease G (489 aa).

Positions 39–128 (GNIYKGRVSR…LTTDITLPSR (90 aa)) constitute an S1 motif domain. Aspartate 304 and aspartate 347 together coordinate Mg(2+).

This sequence belongs to the RNase E/G family. RNase G subfamily. As to quaternary structure, homodimer, in equilibrium with possible higher multimers. It depends on Mg(2+) as a cofactor.

The protein localises to the cytoplasm. Its function is as follows. An endonuclease that acts in the processing of the 5'-end of 16S rRNA and 23S rRNA. It prefers 5'-monophosphorylated substrates and cleaves single-stranded sites rich in A and U residues; contributes to tRNA processing and mRNA turnover. The protein is Ribonuclease G (rng) of Escherichia coli O157:H7.